The following is a 283-amino-acid chain: ATP phosphoribosyltransferase (283 aa).

It belongs to the ATP phosphoribosyltransferase family. Long subfamily. Mg(2+) serves as cofactor.

The protein localises to the cytoplasm. The catalysed reaction is 1-(5-phospho-beta-D-ribosyl)-ATP + diphosphate = 5-phospho-alpha-D-ribose 1-diphosphate + ATP. The protein operates within amino-acid biosynthesis; L-histidine biosynthesis; L-histidine from 5-phospho-alpha-D-ribose 1-diphosphate: step 1/9. With respect to regulation, feedback inhibited by histidine. Its function is as follows. Catalyzes the condensation of ATP and 5-phosphoribose 1-diphosphate to form N'-(5'-phosphoribosyl)-ATP (PR-ATP). Has a crucial role in the pathway because the rate of histidine biosynthesis seems to be controlled primarily by regulation of HisG enzymatic activity. This is ATP phosphoribosyltransferase from Ignicoccus hospitalis (strain KIN4/I / DSM 18386 / JCM 14125).